The sequence spans 99 residues: Small ribosomal subunit protein bS18 (99 aa).

A compositionally biased stretch (basic and acidic residues) spans 1–25; it reads MAEDHPSVDLDTHLSSPRESEESAP. The disordered stretch occupies residues 1–28; the sequence is MAEDHPSVDLDTHLSSPRESEESAPKKN.

This sequence belongs to the bacterial ribosomal protein bS18 family. As to quaternary structure, part of the 30S ribosomal subunit. Forms a tight heterodimer with protein bS6.

In terms of biological role, binds as a heterodimer with protein bS6 to the central domain of the 16S rRNA, where it helps stabilize the platform of the 30S subunit. The protein is Small ribosomal subunit protein bS18 of Treponema pallidum (strain Nichols).